Here is a 290-residue protein sequence, read N- to C-terminus: L-fucono-1,5-lactonase (290 aa).

The protein belongs to the metallo-dependent hydrolases superfamily.

It catalyses the reaction L-fucono-1,5-lactone + H2O = L-fuconate + H(+). It carries out the reaction L-fucono-1,4-lactone + H2O = L-fuconate + H(+). The enzyme catalyses D-arabinono-1,4-lactone + H2O = D-arabinonate + H(+). The catalysed reaction is L-xylono-1,4-lactone + H2O = L-xylonate + H(+). It catalyses the reaction L-galactono-1,4-lactone + H2O = L-galactonate + H(+). In terms of biological role, catalyzes the hydrolysis of L-fucono-1,5-lactone to L-fuconate. Can also hydrolyze L-fucono-1,4-lactone, L-galactono-1,4-lactone D-arabinono-1,4-lactone and L-xylono-1,4-lactone. The protein is L-fucono-1,5-lactonase of Burkholderia ambifaria (strain ATCC BAA-244 / DSM 16087 / CCUG 44356 / LMG 19182 / AMMD) (Burkholderia cepacia (strain AMMD)).